The primary structure comprises 479 residues: Bifunctional AAC/APH (479 aa).

The N-acetyltransferase domain occupies 8–180; sequence ICIRTLIDDD…DCYLMEYRYD (173 aa). An acetyl-CoA binding site region spans residues 110–153; it reads KGIGTRYIKLIFEFLKKERNANAVILDPHKNNPRAIRAYQKSGF. Asp-374 serves as the catalytic Proton acceptor; for phosphotransferase activity. Asp-393 lines the a gentamycin pocket.

It in the C-terminal section; belongs to the aminoglycoside phosphotransferase family.

Its subcellular location is the cytoplasm. It catalyses the reaction a gentamycin + GTP = a gentamycin 2''-phosphate + GDP + H(+). Functionally, involved in resistance to gentamicin, tobramycin, and kanamycin. Tobramycin and kanamycin resistance is due to the ACC activity, specified by N-terminal region. The C-terminal region is a kinase that phosphorylates several 4,6-disubstituted aminoglycosides. The chain is Bifunctional AAC/APH (aacA-aphD) from Enterococcus faecalis (strain ATCC 700802 / V583).